The chain runs to 465 residues: MFIDGKWILREDLDILNPYTLEIIERITALDREETKYAIEVATENKDVMKELNPSKRYSLLMKIAEHISSKKDLFANTISVDVGKPIKQSRIEVDRTITAFRLSALYAKELRGETIPSENEIIFTKKEPVGVVGAITPFNFPLNLITHKIGPAIATGNAVVLHPSSKAPITAIYLTKVIEHVLKKMNIERGVFNLTTGNGEIVGDEIAKNEKINFLSFTGSVEVGELISKSSYMKKVALELGGNNPLIVLKDSDIELAAKSAVKSKFLNSGQVCISVGKVIVEEEVLETFTKKVIEETKKLVLGNPLDEKTDLGPLITPESALRVEILIKESISEGGELLIGGNRSNSLISPAVLNIDEDNILSKVEAFGPILPILKAKDDEHALNIANNSKYGLQAGIFTNDINKAMKFANKLEYGGVIVNGSPTFRKDNMPFGGIKKSGLGKEGIKYAVEEMCETKTVVIHNM.

220–225 (GSVEVG) serves as a coordination point for NAD(+). Active-site residues include glutamate 240 and cysteine 274.

This sequence belongs to the aldehyde dehydrogenase family. As to quaternary structure, homotetramer.

The catalysed reaction is (S)-lactaldehyde + NAD(+) + H2O = (S)-lactate + NADH + 2 H(+). The protein operates within cofactor biosynthesis; coenzyme F420 biosynthesis. Involved in F420 biosynthesis through the oxidation of lactaldehyde to lactate. This is Lactaldehyde dehydrogenase from Methanococcus vannielii (strain ATCC 35089 / DSM 1224 / JCM 13029 / OCM 148 / SB).